The following is a 237-amino-acid chain: Pyridoxal phosphate homeostasis protein (237 aa).

K35 is subject to N6-(pyridoxal phosphate)lysine.

It belongs to the pyridoxal phosphate-binding protein YggS/PROSC family.

In terms of biological role, pyridoxal 5'-phosphate (PLP)-binding protein, which is involved in PLP homeostasis. This Haemophilus influenzae (strain ATCC 51907 / DSM 11121 / KW20 / Rd) protein is Pyridoxal phosphate homeostasis protein.